A 105-amino-acid chain; its full sequence is Met repressor (105 aa).

The protein belongs to the MetJ family. As to quaternary structure, homodimer.

The protein localises to the cytoplasm. Functionally, this regulatory protein, when combined with SAM (S-adenosylmethionine) represses the expression of the methionine regulon and of enzymes involved in SAM synthesis. This Serratia proteamaculans (strain 568) protein is Met repressor.